A 363-amino-acid chain; its full sequence is 1,2-Dihydrovomilenine reductase (363 aa).

The 329-residue stretch at 24–352 (GILSPFKFSR…KGDVRYRFVI (329 aa)) folds into the Enoyl reductase (ER) domain. Position 51 (C51) interacts with Zn(2+). S53 serves as a coordination point for NADP(+). Residues D54, E74, C104, C107, C110, and C118 each contribute to the Zn(2+) site. NADP(+) contacts are provided by L193, G195, L196, S215, T216, S217, K220, K221, V278, A280, T302, and R349.

The protein belongs to the zinc-containing alcohol dehydrogenase family. Class-P subfamily. In terms of assembly, homodimer. The cofactor is Zn(2+). As to expression, mainly expressed in mature roots and, to a lower extent, in stems and leaves.

It localises to the cytoplasm. It catalyses the reaction 17-O-acetylnorajmaline + NADP(+) = (2R)-1,2-dihydrovomilenine + NADPH + 2 H(+). The catalysed reaction is (20S)-19,20-dihydrovomilenine + NADP(+) = vomilenine + NADPH + H(+). It participates in alkaloid biosynthesis; ajmaline biosynthesis. In terms of biological role, alcohol dehydrogenase involved in the biosynthesis of ajmaline-type monoterpenoid indole alkaloids (MIAs) natural products, important plant-derived pharmaceuticals used in the therapy of heart disorders. Catalyzes the conversion of 1,2-dihydrovomilenine to 17-O-acetylnorajmaline, an intermediate chemical in the biosynthesis of ajmaline. Also able, with a lower efficiency, to convert vomilenine into 19,20-dihydrovomilenine. The sequence is that of 1,2-Dihydrovomilenine reductase from Rauvolfia serpentina (Serpentine wood).